Reading from the N-terminus, the 695-residue chain is Threonine--tRNA ligase 1, cytoplasmic (695 aa).

The disordered stretch occupies residues 1 to 21 (MSEEKASSPSGKMDGEKPLNP). Residues 51-115 (DSKPIKVTLP…ETDCTLELLK (65 aa)) form the TGS domain. Position 215 is an N6-acetyllysine (Lys215). Position 218 is a phosphothreonine (Thr218). Tyr270 carries the phosphotyrosine modification. Thr425 is modified (phosphothreonine).

The protein belongs to the class-II aminoacyl-tRNA synthetase family. Homodimer. In terms of processing, ISGylated.

The protein resides in the cytoplasm. The enzyme catalyses tRNA(Thr) + L-threonine + ATP = L-threonyl-tRNA(Thr) + AMP + diphosphate + H(+). Functionally, catalyzes the attachment of threonine to tRNA(Thr) in a two-step reaction: threonine is first activated by ATP to form Thr-AMP and then transferred to the acceptor end of tRNA(Thr). Also edits incorrectly charged tRNA(Thr) via its editing domain, at the post-transfer stage. This Rattus norvegicus (Rat) protein is Threonine--tRNA ligase 1, cytoplasmic (Tars1).